The sequence spans 328 residues: Phenylalanine--tRNA ligase alpha subunit (328 aa).

It belongs to the class-II aminoacyl-tRNA synthetase family. Phe-tRNA synthetase alpha subunit type 1 subfamily. Tetramer of two alpha and two beta subunits. Requires Mg(2+) as cofactor.

The protein localises to the cytoplasm. The catalysed reaction is tRNA(Phe) + L-phenylalanine + ATP = L-phenylalanyl-tRNA(Phe) + AMP + diphosphate + H(+). In Buchnera aphidicola subsp. Baizongia pistaciae (strain Bp), this protein is Phenylalanine--tRNA ligase alpha subunit.